A 34-amino-acid chain; its full sequence is Toxin Ptu1 (34 aa).

Cystine bridges form between Cys-5–Cys-20, Cys-12–Cys-26, and Cys-19–Cys-33.

It localises to the secreted. In terms of biological role, binds reversibly and blocks N-type voltage-gated calcium channels (Cav). The sequence is that of Toxin Ptu1 from Peirates turpis (Assassin bug).